The sequence spans 475 residues: Ribulose bisphosphate carboxylase large chain (475 aa).

Residues 1 to 2 (MS) constitute a propeptide that is removed on maturation. N-acetylproline is present on proline 3. Position 14 is an N6,N6,N6-trimethyllysine (lysine 14). Asparagine 123 and threonine 173 together coordinate substrate. Residue lysine 175 is the Proton acceptor of the active site. A substrate-binding site is contributed by lysine 177. Lysine 201, aspartate 203, and glutamate 204 together coordinate Mg(2+). N6-carboxylysine is present on lysine 201. Histidine 294 (proton acceptor) is an active-site residue. The substrate site is built by arginine 295, histidine 327, and serine 379.

Belongs to the RuBisCO large chain family. Type I subfamily. In terms of assembly, heterohexadecamer of 8 large chains and 8 small chains; disulfide-linked. The disulfide link is formed within the large subunit homodimers. It depends on Mg(2+) as a cofactor. The disulfide bond which can form in the large chain dimeric partners within the hexadecamer appears to be associated with oxidative stress and protein turnover.

It is found in the plastid. It localises to the chloroplast. The catalysed reaction is 2 (2R)-3-phosphoglycerate + 2 H(+) = D-ribulose 1,5-bisphosphate + CO2 + H2O. It carries out the reaction D-ribulose 1,5-bisphosphate + O2 = 2-phosphoglycolate + (2R)-3-phosphoglycerate + 2 H(+). RuBisCO catalyzes two reactions: the carboxylation of D-ribulose 1,5-bisphosphate, the primary event in carbon dioxide fixation, as well as the oxidative fragmentation of the pentose substrate in the photorespiration process. Both reactions occur simultaneously and in competition at the same active site. This chain is Ribulose bisphosphate carboxylase large chain, found in Pinus longaeva (Great Basin bristlecone pine).